Consider the following 959-residue polypeptide: DNA polymerase 1 (959 aa).

The segment at 1 to 110 (MRVRGGQEAA…LTLEPSPQSE (110 aa)) is disordered. Residues 44-60 (KKPEPPPTLHREREPES) are compositionally biased toward basic and acidic residues.

This sequence belongs to the DNA polymerase type-B family.

It carries out the reaction DNA(n) + a 2'-deoxyribonucleoside 5'-triphosphate = DNA(n+1) + diphosphate. The sequence is that of DNA polymerase 1 (polA) from Aeropyrum pernix (strain ATCC 700893 / DSM 11879 / JCM 9820 / NBRC 100138 / K1).